The following is a 223-amino-acid chain: Translation initiation factor 6 (223 aa).

It belongs to the eIF-6 family.

Functionally, binds to the 50S ribosomal subunit and prevents its association with the 30S ribosomal subunit to form the 70S initiation complex. This is Translation initiation factor 6 from Sulfolobus acidocaldarius (strain ATCC 33909 / DSM 639 / JCM 8929 / NBRC 15157 / NCIMB 11770).